Reading from the N-terminus, the 104-residue chain is Chemokine-like protein MC148 (104 aa).

As to quaternary structure, interacts with host CXCL12.

Its function is as follows. Plays a role in antagonizing the chemotaxis of multiple leukocyte subsets induced by CC and CXC chemokines. Displaces the interaction between CXCL12 and CXCR4 and thereby inactivates the antiviral activity of host CXCL12. The protein is Chemokine-like protein MC148 (MC148) of Homo sapiens (Human).